The sequence spans 818 residues: Sodium/hydrogen exchanger 1 (818 aa).

At 1 to 98 (MLLWPGASGL…FPVLGIDYQH (98 aa)) the chain is on the extracellular side. The interval 44-76 (STIRGSEPPRERSIGDVTTAPPELAPESRPVNH) is disordered. Asparagine 75 carries N-linked (GlcNAc...) asparagine glycosylation. The helical transmembrane segment at 99 to 121 (VRIPFEIALWILLACLMKIGFHV) threads the bilayer. Topologically, residues 122 to 130 (IPTISSIVP) are cytoplasmic. A helical transmembrane segment spans residues 131–148 (ESCLLIVVGLLVGGLIKG). Residues 149 to 158 (VGETPPILQS) are Extracellular-facing. The helical transmembrane segment at 159–176 (EVFFLFLLPPIILDAGYF) threads the bilayer. Over 177–186 (LPLRQFTENL) the chain is Cytoplasmic. A helical transmembrane segment spans residues 187-215 (GTILIFAVVGTLWNAFFLGGLMYAVCLVG). At 216–222 (GEQINNI) the chain is on the extracellular side. The helical transmembrane segment at 223–249 (GLLENLLFGSIISAVDPVAVLAVFEEI) threads the bilayer. The Cytoplasmic portion of the chain corresponds to 250–252 (HIN). The helical transmembrane segment at 253–283 (ELLHILVFGESLLNDAVTVVLYHLFEEFANY) threads the bilayer. Over 284–287 (DRVG) the chain is Extracellular. Residues 288-322 (IVDIILGFLSFFVVSLGGVFVGVVYGVIAAFTSRF) form a helical membrane-spanning segment. Topologically, residues 323–328 (TSHIRV) are cytoplasmic. A helical membrane pass occupies residues 329–341 (IEPLFVFLYSYMA). The Extracellular segment spans residues 342–350 (YLSAELFHL). Residues 351 to 371 (SGIMALIASGVVMRPYVEANI) traverse the membrane as a helical segment. The Cytoplasmic segment spans residues 372 to 373 (SH). Residues 374–404 (KSHTTIKYFLKMWSSVSETLIFIFLGVSTVA) form a helical membrane-spanning segment. Topologically, residues 405 to 410 (GSHHWN) are extracellular. A helical membrane pass occupies residues 411–438 (WTFVISTLLFCLIARVLGVLGLTWFINK). Residues 439 to 444 (FRIVKL) are Cytoplasmic-facing. A helical transmembrane segment spans residues 445-469 (TPKDQFIIAYGGLRGAIAFSLGYLL). At 470 to 475 (DKKHFP) the chain is on the extracellular side. Residues 476–505 (MCDLFLTAIITVIFFTVFVQGMTIRPLVDL) traverse the membrane as a helical segment. Residues 503 to 545 (VDLLAVKKKQETKRSINEEIHTQFLDHLLTGIEDICGHYGHHH) form an interaction with TESC region. The Cytoplasmic portion of the chain corresponds to 506–818 (LAVKKKQETK…EGEPFIPKGQ (313 aa)). Residues 509–516 (KKKQETKR) are PI(4,5)P2-binding region. Residues 515 to 545 (KRSINEEIHTQFLDHLLTGIEDICGHYGHHH) form an interaction with CHP2 region. Residues 540–545 (HYGHHH) are confers pH-dependent PI(4,5)P2 binding. Residues 552–560 (RFNKKYVKK) form a PI(4,5)P2-binding region region. 2 positions are modified to phosphoserine: serine 599 and serine 602. Threonine 603 carries the post-translational modification Phosphothreonine. Serine 605 and serine 648 each carry phosphoserine. The interval 633 to 818 (KILRNNLQKT…EGEPFIPKGQ (186 aa)) is interaction with TESC. Positions 633–818 (KILRNNLQKT…EGEPFIPKGQ (186 aa)) are interaction with CALM1. Positions 684 to 687 (LTVP) are interaction with PPP3CA. A phosphoserine mark is found at serine 693, serine 697, and serine 703. Residues 715–720 (PVITID) are interaction with PPP3CA. A phosphoserine mark is found at serine 723, serine 726, and serine 729. Residues 741–818 (VLGLSRDPGR…EGEPFIPKGQ (78 aa)) form a disordered region. A Phosphothreonine modification is found at threonine 782. Residues 785-794 (PSDSPSSQRI) show a composition bias toward polar residues. Phosphoserine is present on residues serine 788, serine 790, and serine 799.

Belongs to the monovalent cation:proton antiporter 1 (CPA1) transporter (TC 2.A.36) family. In terms of assembly, homodimer; dimerization is crucial for its function. Oligomer. Interacts with CALM in a calcium-dependent manner. Interacts with TESC. Interacts (via the juxtamembrane region of the cytoplasmic C-terminal domain) with CHP1; the interaction occurs at the plasma membrane in a calcium-dependent manner. Interacts with CHP2; the interaction occurs in a calcium-dependent manner. Interacts with EZR; regulates the cytoskeletal interactions of SLC9A1 and promotes stress fiber formation. In terms of processing, ubiquitinated, leading to its degradation by the proteasome. Ubiquitination is reduced by CHP1. O-glycosylated. Post-translationally, palmitoylated; may play a major role in SLC9A1 regulation. In terms of processing, phosphorylation at Thr-782 increases SLC9A1 activity. Specifically dephosphorylated at Thr-782 by PPP3CA that negatively regulates SLC9A1 activity. Phosphorylation at Ser-648 by AKT1 reduces SLC9A1 binding to CALM1.

The protein localises to the cell membrane. The protein resides in the basolateral cell membrane. It carries out the reaction Na(+)(in) + H(+)(out) = Na(+)(out) + H(+)(in). The catalysed reaction is Li(+)(out) + H(+)(in) = Li(+)(in) + H(+)(out). It catalyses the reaction Li(+)(in) + Na(+)(out) = Li(+)(out) + Na(+)(in). Its activity is regulated as follows. Activated at acidic pHs. Inhibited by amiloride and 5-amino-substituted derivatives. Inhibited by cariporide and eniporide. Phosphatidylinositol 4,5-bisphosphate (PI(4,5)P2) and phosphatidylinositol 3,4,5-trisphosphate (PI(3,4,5)P3) bind and differentially regulate SLC9A1 activity. Functionally, electroneutral Na(+) /H(+) antiporter that extrudes Na(+) in exchange for external protons driven by the inward sodium ion chemical gradient, protecting cells from acidification that occurs from metabolism. Exchanges intracellular H(+) ions for extracellular Na(+) in 1:1 stoichiometry. Plays a key role in maintening intracellular pH neutral and cell volume, and thus is important for cell growth, proliferation, migration and survival. In addition, can transport lithium Li(+) and also functions as a Na(+)/Li(+) antiporter. SLC9A1 also functions in membrane anchoring and organization of scaffolding complexes that coordinate signaling inputs. This is Sodium/hydrogen exchanger 1 (SLC9A1) from Bos taurus (Bovine).